The following is a 357-amino-acid chain: UDP-N-acetylglucosamine--N-acetylmuramyl-(pentapeptide) pyrophosphoryl-undecaprenol N-acetylglucosamine transferase (357 aa).

UDP-N-acetyl-alpha-D-glucosamine-binding positions include 12–14 (TAG), Arg166, Ser196, and Gln291.

This sequence belongs to the glycosyltransferase 28 family. MurG subfamily.

The protein resides in the cell membrane. The catalysed reaction is di-trans,octa-cis-undecaprenyl diphospho-N-acetyl-alpha-D-muramoyl-L-alanyl-D-glutamyl-meso-2,6-diaminopimeloyl-D-alanyl-D-alanine + UDP-N-acetyl-alpha-D-glucosamine = di-trans,octa-cis-undecaprenyl diphospho-[N-acetyl-alpha-D-glucosaminyl-(1-&gt;4)]-N-acetyl-alpha-D-muramoyl-L-alanyl-D-glutamyl-meso-2,6-diaminopimeloyl-D-alanyl-D-alanine + UDP + H(+). The protein operates within cell wall biogenesis; peptidoglycan biosynthesis. Functionally, cell wall formation. Catalyzes the transfer of a GlcNAc subunit on undecaprenyl-pyrophosphoryl-MurNAc-pentapeptide (lipid intermediate I) to form undecaprenyl-pyrophosphoryl-MurNAc-(pentapeptide)GlcNAc (lipid intermediate II). The protein is UDP-N-acetylglucosamine--N-acetylmuramyl-(pentapeptide) pyrophosphoryl-undecaprenol N-acetylglucosamine transferase of Geobacillus kaustophilus (strain HTA426).